We begin with the raw amino-acid sequence, 606 residues long: Transmembrane 9 superfamily member 1 (606 aa).

Residues 1–27 (MTVVGNPRSWSCRWLPILILLLGTGHG) form the signal peptide. The N-linked (GlcNAc...) asparagine glycan is linked to N178. 4 helical membrane passes run 237 to 257 (LSII…AVIL), 310 to 330 (VLGV…MALL), 339 to 359 (GAIN…SGYV), and 373 to 393 (VWNI…TWSV). A glycan (N-linked (GlcNAc...) asparagine) is linked at N401. Transmembrane regions (helical) follow at residues 412–432 (ILLL…IGGI), 469–489 (VGGF…FATV), 499–519 (GILF…SIAL), and 535–555 (SVLS…FYYA). N-linked (GlcNAc...) asparagine glycosylation is present at N559. The chain crosses the membrane as a helical span at residues 570-590 (FGYSLLTGYVFFLMLGTISFF).

The protein belongs to the nonaspanin (TM9SF) (TC 9.A.2) family.

The protein resides in the lysosome membrane. It is found in the cytoplasmic vesicle. Its subcellular location is the autophagosome membrane. Functionally, plays an essential role in autophagy. In Pongo abelii (Sumatran orangutan), this protein is Transmembrane 9 superfamily member 1 (TM9SF1).